The primary structure comprises 439 residues: Lipoyl synthase, mitochondrial (439 aa).

A mitochondrion-targeting transit peptide spans Met1–Tyr37. Positions 150, 155, 161, 181, 185, 188, and 396 each coordinate [4Fe-4S] cluster. Residues Gly164–Leu385 enclose the Radical SAM core domain.

The protein belongs to the radical SAM superfamily. Lipoyl synthase family. [4Fe-4S] cluster is required as a cofactor.

The protein localises to the mitochondrion. The catalysed reaction is [[Fe-S] cluster scaffold protein carrying a second [4Fe-4S](2+) cluster] + N(6)-octanoyl-L-lysyl-[protein] + 2 oxidized [2Fe-2S]-[ferredoxin] + 2 S-adenosyl-L-methionine + 4 H(+) = [[Fe-S] cluster scaffold protein] + N(6)-[(R)-dihydrolipoyl]-L-lysyl-[protein] + 4 Fe(3+) + 2 hydrogen sulfide + 2 5'-deoxyadenosine + 2 L-methionine + 2 reduced [2Fe-2S]-[ferredoxin]. The protein operates within protein modification; protein lipoylation via endogenous pathway; protein N(6)-(lipoyl)lysine from octanoyl-[acyl-carrier-protein]: step 2/2. In terms of biological role, catalyzes the radical-mediated insertion of two sulfur atoms into the C-6 and C-8 positions of the octanoyl moiety bound to the lipoyl domains of lipoate-dependent enzymes, thereby converting the octanoylated domains into lipoylated derivatives. This Paracoccidioides lutzii (strain ATCC MYA-826 / Pb01) (Paracoccidioides brasiliensis) protein is Lipoyl synthase, mitochondrial.